The chain runs to 245 residues: tRNA pseudouridine synthase A (245 aa).

D52 serves as the catalytic Nucleophile. Position 111 (Y111) interacts with substrate.

The protein belongs to the tRNA pseudouridine synthase TruA family. Homodimer.

The catalysed reaction is uridine(38/39/40) in tRNA = pseudouridine(38/39/40) in tRNA. Functionally, formation of pseudouridine at positions 38, 39 and 40 in the anticodon stem and loop of transfer RNAs. This chain is tRNA pseudouridine synthase A, found in Rickettsia felis (strain ATCC VR-1525 / URRWXCal2) (Rickettsia azadi).